The sequence spans 288 residues: MSAKIIDGKTIAQQVRNEVAAVVQQRLAAGKRAPGLAVVLVGENPASQIYVASKRKACEEVGFVSRSYDLPMATSEAELLALIDSLNEDTEIDGILIQLPLPNGIDNVKVLERIHPDKDVDGFHPYNVGRLCQRAPKLRACTPRGIMTLLERYDIPTYGLNAVVVGASNIVGRPMSLELLLAGCTTTVTHRFTKNLRHHIENADLLVVAVGKPGFIPGEWIKPGAIVIDVGINRLESGKVVGDVAFDVAAERAGWITPVPGGVGPMTVATLIQNTLQACEEYHDISQN.

NADP(+)-binding positions include 166 to 168 and Ile-232; that span reads GAS.

This sequence belongs to the tetrahydrofolate dehydrogenase/cyclohydrolase family. As to quaternary structure, homodimer.

It catalyses the reaction (6R)-5,10-methylene-5,6,7,8-tetrahydrofolate + NADP(+) = (6R)-5,10-methenyltetrahydrofolate + NADPH. It carries out the reaction (6R)-5,10-methenyltetrahydrofolate + H2O = (6R)-10-formyltetrahydrofolate + H(+). The protein operates within one-carbon metabolism; tetrahydrofolate interconversion. Catalyzes the oxidation of 5,10-methylenetetrahydrofolate to 5,10-methenyltetrahydrofolate and then the hydrolysis of 5,10-methenyltetrahydrofolate to 10-formyltetrahydrofolate. This chain is Bifunctional protein FolD, found in Yersinia pseudotuberculosis serotype O:1b (strain IP 31758).